The primary structure comprises 172 residues: Peptide deformylase 1 (172 aa).

Fe cation is bound by residues Cys91 and His133. Glu134 is an active-site residue. His137 contacts Fe cation.

Belongs to the polypeptide deformylase family. Requires Fe(2+) as cofactor.

The enzyme catalyses N-terminal N-formyl-L-methionyl-[peptide] + H2O = N-terminal L-methionyl-[peptide] + formate. Functionally, removes the formyl group from the N-terminal Met of newly synthesized proteins. Requires at least a dipeptide for an efficient rate of reaction. N-terminal L-methionine is a prerequisite for activity but the enzyme has broad specificity at other positions. The protein is Peptide deformylase 1 of Vibrio parahaemolyticus serotype O3:K6 (strain RIMD 2210633).